The sequence spans 473 residues: BPI fold-containing family B member 3 (473 aa).

An N-terminal signal peptide occupies residues 1–20 (MMLGVYTLLLLWGLATPCLG). Residue Asn139 is glycosylated (N-linked (GlcNAc...) asparagine). Residues Cys161 and Cys196 are joined by a disulfide bond.

It belongs to the BPI/LBP/Plunc superfamily. BPI/LBP family.

Its subcellular location is the secreted. Functionally, may have the capacity to recognize and bind specific classes of odorants. May act as a carrier molecule, transporting odorants across the mucus layer to access receptor sites. May serve as a primary defense mechanism by recognizing and removing potentially harmful odorants or pathogenic microorganisms from the mucosa or clearing excess odorant from mucus to enable new odorant stimuli to be received. This Mus musculus (Mouse) protein is BPI fold-containing family B member 3.